The sequence spans 179 residues: Translationally-controlled tumor protein homolog (179 aa).

The TCTP domain maps to 1–179 (MIIYKDIISG…WKHGLEEMKV (179 aa)).

The protein belongs to the TCTP family.

It localises to the cytoplasm. Its subcellular location is the cytoskeleton. Functionally, involved in protein synthesis. Involved in microtubule stabilization. Involved in osmoadaptation. This chain is Translationally-controlled tumor protein homolog, found in Emericella nidulans (strain FGSC A4 / ATCC 38163 / CBS 112.46 / NRRL 194 / M139) (Aspergillus nidulans).